We begin with the raw amino-acid sequence, 211 residues long: MAQARISAKANEGRFCRSSSMADRSSRLLESLDQLELRVEALREAATAVEQEKEVLLEMIHSIQNSQDMRQISDGEREELNLTANRLMGRTLTVEVSVETIRSPQQQESLKHATRIIDEVVSKFLDDLGNARSHLMSLYSACSSEVPAGPVDQKFQSIVIGCALEDQKKIKRRLETLLRNIENADKAIKLLEHSKGAASKTLQQNAEARFN.

Ala-2 is modified (N-acetylalanine). Phosphoserine is present on residues Ser-20, Ser-31, and Ser-73. A coiled-coil region spans residues 20-61 (SMADRSSRLLESLDQLELRVEALREAATAVEQEKEVLLEMIH). The BAG domain occupies 109-189 (SLKHATRIID…NIENADKAIK (81 aa)).

As to quaternary structure, binds to the ATPase domain of HSP/HSC70 chaperones. May interact with NWD1. Interacts with HSPA1A (via NBD), HSPA1B (via NBD) and HSPA8. May interact with DNJC9; the interaction seems to be histone-dependent.

In terms of biological role, co-chaperone for HSP70 and HSC70 chaperone proteins. Acts as a nucleotide-exchange factor (NEF) promoting the release of ADP from the HSP70 and HSC70 proteins thereby triggering client/substrate protein release. The protein is BAG family molecular chaperone regulator 2 of Bos taurus (Bovine).